The sequence spans 204 residues: Peptide deformylase (204 aa).

2 residues coordinate Fe cation: cysteine 131 and histidine 174. Glutamate 175 is a catalytic residue. A Fe cation-binding site is contributed by histidine 178.

It belongs to the polypeptide deformylase family. The cofactor is Fe(2+).

It carries out the reaction N-terminal N-formyl-L-methionyl-[peptide] + H2O = N-terminal L-methionyl-[peptide] + formate. Removes the formyl group from the N-terminal Met of newly synthesized proteins. Requires at least a dipeptide for an efficient rate of reaction. N-terminal L-methionine is a prerequisite for activity but the enzyme has broad specificity at other positions. This is Peptide deformylase from Streptococcus mutans serotype c (strain ATCC 700610 / UA159).